The sequence spans 691 residues: DNA ligase (691 aa).

Residues 41-45, 90-91, and glutamate 130 contribute to the NAD(+) site; these read DAEYD and SL. Lysine 132 acts as the N6-AMP-lysine intermediate in catalysis. Residues arginine 153, glutamate 190, lysine 307, and lysine 331 each contribute to the NAD(+) site. Zn(2+) is bound by residues cysteine 425, cysteine 428, cysteine 443, and cysteine 449. The 82-residue stretch at 610 to 691 folds into the BRCT domain; sequence APQGVLAGKT…MHTLLEGHAR (82 aa).

The protein belongs to the NAD-dependent DNA ligase family. LigA subfamily. Requires Mg(2+) as cofactor. Mn(2+) is required as a cofactor.

It carries out the reaction NAD(+) + (deoxyribonucleotide)n-3'-hydroxyl + 5'-phospho-(deoxyribonucleotide)m = (deoxyribonucleotide)n+m + AMP + beta-nicotinamide D-nucleotide.. Its function is as follows. DNA ligase that catalyzes the formation of phosphodiester linkages between 5'-phosphoryl and 3'-hydroxyl groups in double-stranded DNA using NAD as a coenzyme and as the energy source for the reaction. It is essential for DNA replication and repair of damaged DNA. This Burkholderia pseudomallei (strain K96243) protein is DNA ligase.